Consider the following 215-residue polypeptide: Ras-related protein Rab-5A (215 aa).

The GTP site is built by serine 29, alanine 30, glycine 32, lysine 33, serine 34, serine 35, histidine 46, glutamate 47, threonine 52, and glycine 78. Mg(2+) is bound at residue serine 34. Short sequence motifs (switch) lie at residues 44-56 (QFHE…IGAA) and 77-93 (AGQE…YRGA). Residue threonine 52 participates in Mg(2+) binding. The residue at position 84 (serine 84) is a Phosphoserine. Residues asparagine 133, lysine 134, aspartate 136, alanine 164, and lysine 165 each coordinate GTP. The disordered stretch occupies residues 185 to 215 (EPQNPGINCTRGRGVDLTEPTQPTRSQCCSN). Residues 203 to 215 (EPTQPTRSQCCSN) are compositionally biased toward polar residues. 2 S-geranylgeranyl cysteine lipidation sites follow: cysteine 212 and cysteine 213.

The protein belongs to the small GTPase superfamily. Rab family. In terms of assembly, interacts with GDI1; this promotes dissociation from membranes; phosphorylation at Ser-84 disrupts this interaction. Interacts with GDI2; phosphorylation at Ser-84 disrupts the interaction. Interacts with SGSM1 and SGSM3. Interacts with PIK3CB. Interacts with RIN1 and GAPVD1, which regulate its pathway, probably by acting as a GEF. Interacts with RINL. Interacts with ALS2CL, SUN2, ZFYVE20 and RUFY1. Interacts with RABEP1; one RABEP1 homodimer binds two RAB5A chains, but at opposite sides of the dimer. Interacts with OCRL and INPP5F. May be a component of a complex composed of RAB5A, DYN2 and PIK3C3. Does not interact with the BLOC-3 complex (heterodimer of HPS1 and HPS4). Interacts with CLN5. Interacts with APPL2. Interacts with F8A1/F8A2/F8A3. Found in a complex with F8A1/F8A2/F8A3, HTT and RAB5A; mediates the recruitment of HTT by RAB5A onto early endosomes. Interacts with ATP9A. Interacts with PPP1R21; mediates the recruitment of FERRY complex by RAB5A onto early endosomes. Mg(2+) serves as cofactor. Post-translationally, phosphorylation of Ser-84 in the switch II region by LRRK2 prevents the association of RAB regulatory proteins, including RAB GDP dissociation inhibitors GDI1 and GDI2.

It localises to the cell membrane. Its subcellular location is the early endosome membrane. It is found in the melanosome. The protein localises to the cytoplasmic vesicle. The protein resides in the cell projection. It localises to the ruffle. Its subcellular location is the membrane. It is found in the cytoplasm. The protein localises to the cytosol. The protein resides in the phagosome membrane. It localises to the endosome membrane. It catalyses the reaction GTP + H2O = GDP + phosphate + H(+). With respect to regulation, regulated by guanine nucleotide exchange factors (GEFs) including RINL, which promote the exchange of bound GDP for free GTP. Regulated by GTPase activating proteins (GAPs) which increase the GTP hydrolysis activity. Inhibited by GDP dissociation inhibitors (GDIs). Its function is as follows. The small GTPases Rab are key regulators of intracellular membrane trafficking, from the formation of transport vesicles to their fusion with membranes. Rabs cycle between an inactive GDP-bound form and an active GTP-bound form that is able to recruit to membranes different sets of downstream effectors directly responsible for vesicle formation, movement, tethering and fusion. RAB5A is required for the fusion of plasma membranes and early endosomes. Contributes to the regulation of filopodia extension. Required for the exosomal release of SDCBP, CD63, PDCD6IP and syndecan. Regulates maturation of apoptotic cell-containing phagosomes, probably downstream of DYN2 and PIK3C3. The protein is Ras-related protein Rab-5A (RAB5A) of Sus scrofa (Pig).